We begin with the raw amino-acid sequence, 430 residues long: Enolase (430 aa).

Residue Gln165 coordinates (2R)-2-phosphoglycerate. The Proton donor role is filled by Glu207. Asp244, Glu287, and Asp314 together coordinate Mg(2+). 4 residues coordinate (2R)-2-phosphoglycerate: Lys339, Arg368, Ser369, and Lys390. The Proton acceptor role is filled by Lys339.

Belongs to the enolase family. Component of the RNA degradosome, a multiprotein complex involved in RNA processing and mRNA degradation. It depends on Mg(2+) as a cofactor.

The protein localises to the cytoplasm. Its subcellular location is the secreted. The protein resides in the cell surface. The enzyme catalyses (2R)-2-phosphoglycerate = phosphoenolpyruvate + H2O. The protein operates within carbohydrate degradation; glycolysis; pyruvate from D-glyceraldehyde 3-phosphate: step 4/5. Catalyzes the reversible conversion of 2-phosphoglycerate (2-PG) into phosphoenolpyruvate (PEP). It is essential for the degradation of carbohydrates via glycolysis. The protein is Enolase of Xanthomonas euvesicatoria pv. vesicatoria (strain 85-10) (Xanthomonas campestris pv. vesicatoria).